The primary structure comprises 511 residues: Peptide transporter YePEPT (511 aa).

The Cytoplasmic portion of the chain corresponds to 1–19 (MQTSTNTPGGRTFFGHPYP). The chain crosses the membrane as a helical span at residues 20 to 45 (LSGLFLSEMWERFSFYGIRPLLILFM). Topologically, residues 46-59 (AATVFDGGMGLPRE) are periplasmic. A helical transmembrane segment spans residues 60–84 (QASAIVGIFAGSMYLAALPGGLLAD). At 85–88 (NWLG) the chain is on the cytoplasmic side. Residues 89–109 (QQRAVWYGSILIALGHLSIAL) form a helical membrane-spanning segment. Residues 110–115 (SAFFGN) lie on the Periplasmic side of the membrane. The helical transmembrane segment at 116 to 138 (DLFFIGLVFIVLGTGLFKTCISV) threads the bilayer. The Cytoplasmic portion of the chain corresponds to 139 to 149 (MVGTLYKPGDA). A helical transmembrane segment spans residues 150 to 175 (RRDGGFSLFYMGINMGSFIAPLLSGW). At 176-181 (LLRTHG) the chain is on the periplasmic side. A helical transmembrane segment spans residues 182–208 (WHWGFGIGGIGMLVALLIFRGFAIPAM). The Cytoplasmic portion of the chain corresponds to 209-232 (KRYDAEVGLDSSWNKPTNQRQGVG). A helical membrane pass occupies residues 233–253 (RWVTAIMAVVVVIIALISQGV). The Periplasmic portion of the chain corresponds to 254-256 (IPI). Residues 257–279 (NPVMIASLLVYVIAASVTLYFIY) form a helical membrane-spanning segment. Over 280–294 (LFAFAKMSRKDRARL) the chain is Cytoplasmic. Residues 295 to 321 (LVCFILLVSAAFFWSAFEQKPTSFNLF) form a helical membrane-spanning segment. Residues 322 to 335 (ANDYTDRMVMGFEI) lie on the Periplasmic side of the membrane. The chain crosses the membrane as a helical span at residues 336–357 (PTVWFQSINALFIILLAPVFSW). Over 358–369 (AWPALAKKKIQP) the chain is Cytoplasmic. The chain crosses the membrane as a helical span at residues 370–396 (SSITKFVIGILCAAAGFAVMMYAAQHV). Residues 397 to 405 (LSSGGAGVS) lie on the Periplasmic side of the membrane. The chain crosses the membrane as a helical span at residues 406 to 426 (PLWLVMSILLLTLGELCLSPI). The Cytoplasmic segment spans residues 427–441 (GLATMTLLAPDRMRG). Residues 442-462 (QVMGLWFCASSLGNLAAGLIG) form a helical membrane-spanning segment. Topologically, residues 463 to 471 (GHVKADQLD) are periplasmic. The chain crosses the membrane as a helical span at residues 472-496 (MLPTLFARCSIALVICAAVLILLIV). Topologically, residues 497–511 (PIRRLMNNTQGQQTA) are cytoplasmic.

This sequence belongs to the major facilitator superfamily. Proton-dependent oligopeptide transporter (POT/PTR) (TC 2.A.17) family.

Its subcellular location is the cell inner membrane. Its activity is regulated as follows. Transport is inhibited by the proton ionophore carbonyl cyanide m-chlorophenylhydrazone (CCCP). Its function is as follows. Mediates the proton-dependent uptake of dipeptides. Shows higher affinity for dipeptides with a negatively charged amino acid residue at the N-terminal position, such as Asp-Ala and Glu-Ala. Also displays specificity for Ala-Ala, Ala-Tyr and Tyr-Ala. The sequence is that of Peptide transporter YePEPT from Yersinia enterocolitica subsp. palearctica serotype O:3 (strain YE-P4).